A 293-amino-acid polypeptide reads, in one-letter code: Epidermal growth factor-like protein 8 (293 aa).

The signal sequence occupies residues 1–28; it reads MGLWAELCISLRGLSFFLVLMTGEGTRG. Residues 34–112 enclose the EMI domain; sequence SLGVCSKQTL…PHPGALTCDA (79 aa). Intrachain disulfides connect Cys-38/Cys-97, Cys-65/Cys-71, Cys-96/Cys-110, Cys-114/Cys-124, Cys-118/Cys-130, Cys-132/Cys-141, Cys-148/Cys-159, Cys-155/Cys-168, and Cys-170/Cys-183. Asn-50 carries N-linked (GlcNAc...) asparagine glycosylation. Residues 111–142 form the EGF-like 1 domain; that stretch reads DAICSKPCLNGGVCTGPDRCECAPGWGGKHCH. Residues 144–184 enclose the EGF-like 2; calcium-binding domain; sequence DVDECRASLTLCSHGCLNTLGSFLCSCPHPLVLGLDGRTCA. The stretch at 206–235 forms a coiled coil; sequence SEEERALRWEVAELRGRLEKLEQWATQAGA.

In terms of tissue distribution, ubiquitously expressed in brain, kidney, thymus and lung.

It localises to the secreted. In Mus musculus (Mouse), this protein is Epidermal growth factor-like protein 8 (Egfl8).